Reading from the N-terminus, the 425-residue chain is Orexin/Hypocretin receptor type 1 (425 aa).

Topologically, residues 1–46 (MEPSATPGPQMGVPTGVGDPSLVPPDYEEEFLSYLWRDYLYPKQYE) are extracellular. Residues 26-41 (DYEEEFLSYLWRDYLY) form a required for response to orexin-A region. The chain crosses the membrane as a helical span at residues 47–67 (WVLIAAYVAVFLVALVGNTLV). The Cytoplasmic portion of the chain corresponds to 68–82 (CLAVWRNHHMRTVTN). A helical membrane pass occupies residues 83 to 105 (YFIVNLSLADVLVTAICLPASLL). Residues 106–119 (VDITESWLFGHALC) are Extracellular-facing. Residues Cys119 and Cys202 are joined by a disulfide bond. A helical membrane pass occupies residues 120-140 (KVIPYLQAVSVSVAVLTLSFI). The Cytoplasmic segment spans residues 141 to 160 (ALDRWYAIYHPLLFKSTARR). The chain crosses the membrane as a helical span at residues 161-182 (ARGSILGIWAVSPAVMVPQAAV). Topologically, residues 183–213 (MECSSVLPELANRTRLFSVCDERWADDLYPK) are extracellular. Residues 214 to 235 (IYHSCFFIVTYLAPLGLMAMAY) traverse the membrane as a helical segment. The Cytoplasmic portion of the chain corresponds to 236–298 (FQIFRKLWGR…QMRARRKTAK (63 aa)). Residues 299-321 (MLMVVLLVFALCYLPISVLNVLK) form a helical membrane-spanning segment. Over 322 to 336 (RVFGMFRQTSDREAV) the chain is Extracellular. Residues 337–360 (YACFTFSHWLVYANSAANPIIYNF) traverse the membrane as a helical segment. Topologically, residues 361 to 425 (LSGKFREQFK…VLTSVTTVLP (65 aa)) are cytoplasmic.

The protein belongs to the G-protein coupled receptor 1 family.

The protein resides in the cell membrane. Its function is as follows. Moderately selective excitatory receptor for orexin-A and, with a lower affinity, for orexin-B neuropeptide. Triggers an increase in cytoplasmic Ca(2+) levels in response to orexin-A binding. The polypeptide is Orexin/Hypocretin receptor type 1 (Sus scrofa (Pig)).